Reading from the N-terminus, the 162-residue chain is Serine-protein kinase RsbW (162 aa).

This sequence belongs to the anti-sigma-factor family.

The catalysed reaction is L-seryl-[protein] + ATP = O-phospho-L-seryl-[protein] + ADP + H(+). It carries out the reaction L-threonyl-[protein] + ATP = O-phospho-L-threonyl-[protein] + ADP + H(+). Functionally, negative regulator of sigma-B activity. Phosphorylates and inactivates its specific antagonist protein, RsbV. Upon phosphorylation of RsbV, RsbW is released and binds to sigma-B, thereby blocking its ability to form an RNA polymerase holoenzyme (E-sigma-B). The chain is Serine-protein kinase RsbW from Halalkalibacterium halodurans (strain ATCC BAA-125 / DSM 18197 / FERM 7344 / JCM 9153 / C-125) (Bacillus halodurans).